A 184-amino-acid chain; its full sequence is ATP synthase subunit b 1 (184 aa).

Residues 4 to 24 (LSILAVLAASPAMAATGPFLS) form a helical membrane-spanning segment.

Belongs to the ATPase B chain family. As to quaternary structure, F-type ATPases have 2 components, F(1) - the catalytic core - and F(0) - the membrane proton channel. F(1) has five subunits: alpha(3), beta(3), gamma(1), delta(1), epsilon(1). F(0) has three main subunits: a(1), b(2) and c(10-14). The alpha and beta chains form an alternating ring which encloses part of the gamma chain. F(1) is attached to F(0) by a central stalk formed by the gamma and epsilon chains, while a peripheral stalk is formed by the delta and b chains.

Its subcellular location is the cell inner membrane. Its function is as follows. F(1)F(0) ATP synthase produces ATP from ADP in the presence of a proton or sodium gradient. F-type ATPases consist of two structural domains, F(1) containing the extramembraneous catalytic core and F(0) containing the membrane proton channel, linked together by a central stalk and a peripheral stalk. During catalysis, ATP synthesis in the catalytic domain of F(1) is coupled via a rotary mechanism of the central stalk subunits to proton translocation. Component of the F(0) channel, it forms part of the peripheral stalk, linking F(1) to F(0). In Cereibacter sphaeroides (strain ATCC 17029 / ATH 2.4.9) (Rhodobacter sphaeroides), this protein is ATP synthase subunit b 1.